The primary structure comprises 570 residues: Enhancer of polycomb-like protein 1 (570 aa).

Residues 541-570 form a disordered region; it reads ALNNLNSGQTSGQTMGSNPGPGAIAPTPET. Polar residues predominate over residues 543 to 557; sequence NNLNSGQTSGQTMGS.

It belongs to the enhancer of polycomb family. In terms of assembly, component of the NuA4 histone acetyltransferase complex.

The protein resides in the nucleus. Its function is as follows. Component of the NuA4 histone acetyltransferase complex which is involved in transcriptional activation of selected genes principally by acetylation of nucleosomal histone H4 and H2A. The NuA4 complex is also involved in DNA repair. Involved in gene silencing by neighboring heterochromatin, blockage of the silencing spreading along the chromosome, and required for cell cycle progression through G2/M. This chain is Enhancer of polycomb-like protein 1 (epl1), found in Emericella nidulans (strain FGSC A4 / ATCC 38163 / CBS 112.46 / NRRL 194 / M139) (Aspergillus nidulans).